The chain runs to 445 residues: Argininosuccinate synthase (445 aa).

ATP is bound by residues 17–25 (AFSGGLDTS) and A43. Y99 serves as a coordination point for L-citrulline. G129 and T131 together coordinate ATP. Residues T131, N135, and D136 each coordinate L-aspartate. An L-citrulline-binding site is contributed by N135. Position 136 (D136) interacts with ATP. L-citrulline is bound by residues R139 and S192. Residue D194 coordinates ATP. L-citrulline contacts are provided by T201, E203, and E280.

Belongs to the argininosuccinate synthase family. Type 2 subfamily. As to quaternary structure, homotetramer.

The protein localises to the cytoplasm. The catalysed reaction is L-citrulline + L-aspartate + ATP = 2-(N(omega)-L-arginino)succinate + AMP + diphosphate + H(+). It participates in amino-acid biosynthesis; L-arginine biosynthesis; L-arginine from L-ornithine and carbamoyl phosphate: step 2/3. The polypeptide is Argininosuccinate synthase (argG) (Bradyrhizobium diazoefficiens (strain JCM 10833 / BCRC 13528 / IAM 13628 / NBRC 14792 / USDA 110)).